We begin with the raw amino-acid sequence, 668 residues long: Neurexin-3-beta (668 aa).

The signal sequence occupies residues 1–35 (MHLRTNPSICPGRRPAWTLWMCSLFWGCIVSSVWS). The Extracellular segment spans residues 36 to 593 (SSNVASSASS…EVVRESSSTT (558 aa)). Residues 84-284 (ATYIFGKSGG…NPNIKINGSV (201 aa)) form the Laminin G-like domain. A disordered region spans residues 510-529 (TASSSTGMVPKLPAGKMNNR). Residues 594 to 614 (GMVVGIVAAAALCILILLYAM) traverse the membrane as a helical segment. Residues 615–668 (YKYRNRDEGSYQVDETRNYISNSAQSNGTLMKEKQQSSKSGHKKQKNKDKEYYV) lie on the Cytoplasmic side of the membrane. A disordered region spans residues 636 to 668 (NSAQSNGTLMKEKQQSSKSGHKKQKNKDKEYYV).

It belongs to the neurexin family. Processed by alpha-secretase leading to the formation of an extracellular soluble protein as well as a C-terminal membrane-embedded fragment (CTF). Proteolysis of these CTFs by gamma-secretase releases intracellular domains (ICDs) and extracellular peptides. As to expression, brain and arteries (at protein level).

It localises to the membrane. Its function is as follows. Neuronal cell surface protein that may be involved in cell recognition and cell adhesion. Plays a role in angiogenesis. This chain is Neurexin-3-beta (NRXN3), found in Gallus gallus (Chicken).